The chain runs to 334 residues: Ornithine carbamoyltransferase (334 aa).

Carbamoyl phosphate contacts are provided by residues Ser57 to Thr60, Gln84, Arg108, and His135 to Gln138. Residues Asn168, Asp233, and Ser237 to Met238 contribute to the L-ornithine site. Residues Cys275–Leu276 and Arg320 contribute to the carbamoyl phosphate site.

The protein belongs to the aspartate/ornithine carbamoyltransferase superfamily. OTCase family.

Its subcellular location is the cytoplasm. The enzyme catalyses carbamoyl phosphate + L-ornithine = L-citrulline + phosphate + H(+). It participates in amino-acid biosynthesis; L-arginine biosynthesis; L-arginine from L-ornithine and carbamoyl phosphate: step 1/3. Functionally, reversibly catalyzes the transfer of the carbamoyl group from carbamoyl phosphate (CP) to the N(epsilon) atom of ornithine (ORN) to produce L-citrulline. This is Ornithine carbamoyltransferase from Thermobifida fusca (strain YX).